Here is a 70-residue protein sequence, read N- to C-terminus: Conotoxin Cl6.13 (70 aa).

The N-terminal stretch at 1–21 is a signal peptide; sequence MKFPLLFISLALAAFLTRVQD. The propeptide occupies 22–33; sequence ADSSVISKEKSV. 3 disulfides stabilise this stretch: C41-C58, C48-C63, and C57-C68.

As to expression, expressed by the venom duct.

It is found in the secreted. This chain is Conotoxin Cl6.13, found in Californiconus californicus (California cone).